Consider the following 727-residue polypeptide: NADH-ubiquinone oxidoreductase 75 kDa subunit, mitochondrial (727 aa).

A mitochondrion-targeting transit peptide spans Met1–Thr23. Residues Asn30–Lys108 form the 2Fe-2S ferredoxin-type domain. 3 residues coordinate [2Fe-2S] cluster: Cys64, Cys75, and Cys78. Lys84 bears the N6-acetyllysine mark. Residue Cys92 participates in [2Fe-2S] cluster binding. The 40-residue stretch at Lys108–Gly147 folds into the 4Fe-4S His(Cys)3-ligated-type domain. The [4Fe-4S] cluster site is built by His124, Cys128, Cys131, Cys137, Cys176, Cys179, Cys182, and Cys226. The 4Fe-4S Mo/W bis-MGD-type domain occupies Thr245–Arg301. Lys467, Lys499, and Lys709 each carry N6-acetyllysine.

The protein belongs to the complex I 75 kDa subunit family. As to quaternary structure, core subunit of respiratory chain NADH dehydrogenase (Complex I) which is composed of 45 different subunits. This is the largest subunit of complex I and it is a component of the iron-sulfur (IP) fragment of the enzyme. Complex I associates with ubiquinol-cytochrome reductase complex (Complex III) to form supercomplexes. Interacts with MDM2 and AKAP1. [2Fe-2S] cluster is required as a cofactor. [4Fe-4S] cluster serves as cofactor.

It localises to the mitochondrion inner membrane. It carries out the reaction a ubiquinone + NADH + 5 H(+)(in) = a ubiquinol + NAD(+) + 4 H(+)(out). In terms of biological role, core subunit of the mitochondrial membrane respiratory chain NADH dehydrogenase (Complex I) which catalyzes electron transfer from NADH through the respiratory chain, using ubiquinone as an electron acceptor. Essential for catalysing the entry and efficient transfer of electrons within complex I. Plays a key role in the assembly and stability of complex I and participates in the association of complex I with ubiquinol-cytochrome reductase complex (Complex III) to form supercomplexes. In Pan troglodytes (Chimpanzee), this protein is NADH-ubiquinone oxidoreductase 75 kDa subunit, mitochondrial (NDUFS1).